The chain runs to 1412 residues: MKDLVKFLKAQSKSNDDFDVIKIGLASPDKIRSWSFGEVKKPETINYRTFKPERDGLFCARIFGPVKDYECLCGKYKRLRHRGVICEKCGVEVTQTKVRRDRMGHIELACPVAHIWFLKSLPSRIGLILDMPLRDIERVLYFESYVVTEPGMTDLEKNQLLTEEQFLDAEERWGDEFEAKMGAEGIQALLRDMDLEHQCEMMREELQETNSETKRKKITKRLKLLEAFQQSGNKPEWMVMTVLPVLPPDLRPLVPLDGGRFATSDLNDLYRRVINRNNRLKRLLDLVAPDIIVRNEKRMLQESVDALLDNGRRGRAITGSNKRPLKSLADMIKGKQGRFRQNLLGKRVDYSGRSVITVGPYLHLHQCGLPKKMALELFRPFIYSKLESRGIASTIKAAKKMVEREEPIVWDILAEVIREHPILLNRAPTLHRLGIQAFEPILIEGKAIQLHPLVCAAFNADFDGDQMAVHVPLTLEAQLEARALMMSTNNVLSPASGDPIIVPSQDVVLGLYYMTREKVNAKGEGMYFLDPREAEKAYRTGQAELHARVKVRITEHVKNEAGELVAETKLLDTTIGRAILWMIAPKGMPFKVFNQTLGKKAISKLINESYRRLGLKESVILADQIMYTGFAYAARSGASVGIDDMVIPAQKHEIIRAAEAEVAEIQEQFNSGLVTAGERYNKVIDIWAAANERVAKAMMENLSTEEVINREGNPEKQASFNSIFMMADSGARGSAAQIRQLAGMRGLMARPDGSIIETPITANFREGLNVLQYFISTHGARKGLADTALKTANSGYLTRRLVDVAQDLVITEDDCGTHEGIVMTPLIEGGDVKEALRDRVLGRVVAEDVLKPGTEEVLIPRNTLIDEKWCDVIDAESVDVIKVRSVVTCNTDFGVCAKCYGRDLARGHLINQGEAVGVIAAQSIGEPGTQLTMRTFHIGGAASAAAKESSIQVKNAGTIKLTNAKFVTNKEGKIVLTSRNTELTVIDTFGRTKENYKVPYGAVLSKNDGAEVAVGEVVANWDPHTMPVISEVSGRIQFSDIVDGLTVTRQTDELTGLSSIVVQDVGERATAGKDLRPALRLVDAQGNDILIPSTDVAAQYFLPGKAIVTLDDGAEIEVGEALARIPQESVGTKDITGGLPRVADLFEARKPKEPAILAEISGIVSFGKETKGKRRLVITPAEGEAFEEMIPKWRQLNVFEGEMVQRGDVISDGAETPHDILRLRGVHAVTDYIVNEVQEVYRLQGVKINDKHIEVIVRQMLRKAVITNAYDSEFLEGEQVEVSRVKIANRKRAEEGKPLVEFERELLGITKASLATESFISAASFQETTRVLTEAAVAGKRDELRGLKENVIVGRLIPAGTGFAYHQNRAKKRNQQEQAVAFEAPVEKLTGSQPMLISKRNSNSLQTMQLKA.

The Zn(2+) site is built by C71, C73, C86, and C89. Mg(2+) is bound by residues D461, D463, and D465. C815, C889, C896, and C899 together coordinate Zn(2+).

The protein belongs to the RNA polymerase beta' chain family. In terms of assembly, the RNAP catalytic core consists of 2 alpha, 1 beta, 1 beta' and 1 omega subunit. When a sigma factor is associated with the core the holoenzyme is formed, which can initiate transcription. It depends on Mg(2+) as a cofactor. The cofactor is Zn(2+).

It carries out the reaction RNA(n) + a ribonucleoside 5'-triphosphate = RNA(n+1) + diphosphate. DNA-dependent RNA polymerase catalyzes the transcription of DNA into RNA using the four ribonucleoside triphosphates as substrates. The chain is DNA-directed RNA polymerase subunit beta' from Actinobacillus pleuropneumoniae serotype 5b (strain L20).